The chain runs to 437 residues: GTPase Obg (437 aa).

Residues 2-160 (SMFLDTAKIK…RNLELELKVL (159 aa)) form the Obg domain. In terms of domain architecture, OBG-type G spans 161-338 (ADVGLVGFPS…LLEATAELLE (178 aa)). Residues 167 to 174 (GFPSVGKS), 192 to 196 (FTTIV), 214 to 217 (DLPG), 284 to 287 (NKMD), and 319 to 321 (SGI) contribute to the GTP site. The Mg(2+) site is built by serine 174 and threonine 194. Residues 359–437 (GFNPDEPEFA…IGKFEFEFVD (79 aa)) enclose the OCT domain.

This sequence belongs to the TRAFAC class OBG-HflX-like GTPase superfamily. OBG GTPase family. As to quaternary structure, monomer. It depends on Mg(2+) as a cofactor.

Its subcellular location is the cytoplasm. In terms of biological role, an essential GTPase which binds GTP, GDP and possibly (p)ppGpp with moderate affinity, with high nucleotide exchange rates and a fairly low GTP hydrolysis rate. Plays a role in control of the cell cycle, stress response, ribosome biogenesis and in those bacteria that undergo differentiation, in morphogenesis control. This chain is GTPase Obg, found in Streptococcus suis (strain 05ZYH33).